A 146-amino-acid polypeptide reads, in one-letter code: Basic phospholipase A2 (146 aa).

A signal peptide spans 1-21; sequence MNPAHLLVLAAVCVSLLGASS. The propeptide occupies 22 to 27; sequence VPPRPL. Cystine bridges form between cysteine 38–cysteine 97, cysteine 52–cysteine 145, cysteine 54–cysteine 70, cysteine 69–cysteine 127, cysteine 76–cysteine 120, cysteine 86–cysteine 113, and cysteine 106–cysteine 118. Residues tyrosine 53, glycine 55, and glycine 57 each coordinate Ca(2+). The active site involves histidine 73. A Ca(2+)-binding site is contributed by aspartate 74. Asparagine 109 is a glycosylation site (N-linked (GlcNAc...) asparagine). Aspartate 121 is a catalytic residue.

Belongs to the phospholipase A2 family. Group I subfamily. D49 sub-subfamily. The cofactor is Ca(2+). Expressed by the venom gland.

The protein localises to the secreted. The catalysed reaction is a 1,2-diacyl-sn-glycero-3-phosphocholine + H2O = a 1-acyl-sn-glycero-3-phosphocholine + a fatty acid + H(+). In terms of biological role, PLA2 catalyzes the calcium-dependent hydrolysis of the 2-acyl groups in 3-sn-phosphoglycerides. This chain is Basic phospholipase A2, found in Micrurus corallinus (Brazilian coral snake).